A 239-amino-acid chain; its full sequence is Zinc finger protein 575 (239 aa).

A disordered region spans residues 1–62 (MLGGSVKSEV…PQRPHRCPDC (62 aa)). The segment covering 22–31 (PETKAPHQDL) has biased composition (basic and acidic residues). A compositionally biased stretch (basic residues) spans 46–57 (RPRRRPPPQRPH). C2H2-type zinc fingers lie at residues 57–79 (HRCP…RLAH), 85–107 (HPCP…RLTH), 113–135 (HSCP…LWTH), 141–163 (YPCP…RHTH), 171–193 (YPCP…RLCH), and 207–230 (HRCS…RSHH).

It belongs to the krueppel C2H2-type zinc-finger protein family.

The protein resides in the nucleus. Its function is as follows. May be involved in transcriptional regulation. This chain is Zinc finger protein 575 (Znf575), found in Mus musculus (Mouse).